The primary structure comprises 282 residues: Elongation factor Ts (282 aa).

The interval 80–83 is involved in Mg(2+) ion dislocation from EF-Tu; that stretch reads TDFV.

It belongs to the EF-Ts family.

It localises to the cytoplasm. Associates with the EF-Tu.GDP complex and induces the exchange of GDP to GTP. It remains bound to the aminoacyl-tRNA.EF-Tu.GTP complex up to the GTP hydrolysis stage on the ribosome. In Chlamydia muridarum (strain MoPn / Nigg), this protein is Elongation factor Ts (tsf).